The chain runs to 284 residues: MAVVTMKQLLDSGTHFGHQTRRWNPKMKRFIFTDRNGIYIIDLQQTLTYIDKAYEFVKETVAHGGSIMFVGTKKQAQESIAEEATRVGMPYVNQRWLGGMLTNFSTVHKRLQRLKELEAMEQTGGFEGRTKKEILMLTREKNKLERSLGGIRDMQKVPSAIWVVDTNKEHLAVAEARKLNIPIIAILDTNCDPDVVDYPIPGNDDAIRSAALLTKVVASAVAEGLQARAGGGNGNKPEAEAAEPLAEWEQELLAGATASPTAAGAAPGTPEADIQTEPTAPQNP.

Residues 250–272 (QELLAGATASPTAAGAAPGTPEA) show a composition bias toward low complexity. The tract at residues 250–284 (QELLAGATASPTAAGAAPGTPEADIQTEPTAPQNP) is disordered.

The protein belongs to the universal ribosomal protein uS2 family.

The polypeptide is Small ribosomal subunit protein uS2 (Mycobacterium sp. (strain KMS)).